The primary structure comprises 1164 residues: FH1/FH2 domain-containing protein 1 (1164 aa).

Positions 53 to 458 constitute a GBD/FH3 domain; sequence AQIPAVHRLL…AAETEKQVAL (406 aa). Disordered stretches follow at residues 340 to 411 and 470 to 500; these read DIEE…VGPP and MPNE…QSPA. A compositionally biased stretch (basic and acidic residues) spans 355 to 368; sequence KPSSEEGKRSRRSL. Serine 367 is modified (phosphoserine). The segment covering 402-411 has biased composition (low complexity); the sequence is GPASSPVGPP. A Phosphoserine modification is found at serine 486. Residues 487 to 615 form the FH1 domain; that stretch reads PETAPAARTP…LAAPLPHSVP (129 aa). Threonine 495 carries the phosphothreonine modification. 3 positions are modified to phosphoserine: serine 498, serine 523, and serine 573. The disordered stretch occupies residues 566 to 619; that stretch reads GKDIPAPSPPLPLLSGVPPPPPLPPPPPIKGPFPPPPPLPLAAPLPHSVPDSSA. The segment covering 571 to 608 has biased composition (pro residues); sequence APSPPLPLLSGVPPPPPLPPPPPIKGPFPPPPPLPLAA. The interaction with ROCK1 stretch occupies residues 612 to 807; sequence HSVPDSSALP…AEPLFDLKVG (196 aa). An FH2 domain is found at 616–1013; sequence DSSALPTKRK…YRERNKTRGR (398 aa). Threonine 690 is modified (phosphothreonine). Residues 884 to 921 are a coiled coil; that stretch reads LTRCAKVDFEQLTENLGQLERRSRAAEESLRSLAKHEL. A disordered region spans residues 1020-1143; it reads KFSGVAGEAP…NRKSLRRTLK (124 aa). Residues 1028 to 1041 show a composition bias toward low complexity; the sequence is APSNPSVPVAVSSG. Positions 1053–1133 constitute a DAD domain; sequence MKSLLTSRPE…AARERKRSRG (81 aa). Positions 1073-1089 are enriched in polar residues; the sequence is MVQSSSPIMPTVGPSTA. Over residues 1127 to 1142 the composition is skewed to basic residues; it reads ERKRSRGNRKSLRRTL.

Belongs to the formin homology family. Self-associates via the FH2 domain. Binds to F-actin via its N-terminus. Binds to the cytoplasmic domain of CD21 via its C-terminus. Interacts with ROCK1 in a Src-dependent manner. Post-translationally, phosphorylated by ROCK1. As to expression, ubiquitous. Highly expressed in spleen.

Its subcellular location is the cytoplasm. The protein resides in the cytoskeleton. The protein localises to the cell projection. It localises to the bleb. In terms of biological role, required for the assembly of F-actin structures, such as stress fibers. Depends on the Rho-ROCK cascade for its activity. Contributes to the coordination of microtubules with actin fibers and plays a role in cell elongation. Acts synergistically with ROCK1 to promote SRC-dependent non-apoptotic plasma membrane blebbing. In Homo sapiens (Human), this protein is FH1/FH2 domain-containing protein 1 (FHOD1).